The sequence spans 227 residues: Ribose-5-phosphate isomerase A (227 aa).

Substrate contacts are provided by residues 28-31 (TGST), 84-87 (DGAD), and 97-100 (KGGG). The active-site Proton acceptor is Glu-106. Lys-124 is a substrate binding site.

Belongs to the ribose 5-phosphate isomerase family. Homodimer.

The enzyme catalyses aldehydo-D-ribose 5-phosphate = D-ribulose 5-phosphate. Its pathway is carbohydrate degradation; pentose phosphate pathway; D-ribose 5-phosphate from D-ribulose 5-phosphate (non-oxidative stage): step 1/1. Functionally, catalyzes the reversible conversion of ribose-5-phosphate to ribulose 5-phosphate. In Lactiplantibacillus plantarum (strain ATCC BAA-793 / NCIMB 8826 / WCFS1) (Lactobacillus plantarum), this protein is Ribose-5-phosphate isomerase A.